The following is a 1114-amino-acid chain: Kinesin-like protein KIN-12F (1114 aa).

A disordered region spans residues 1-84 (MADNRIAGSL…RSQVSASRPR (84 aa)). 2 stretches are compositionally biased toward polar residues: residues 10–39 (LPTS…SNPD) and 48–80 (PNIH…QVSA). A Kinesin motor domain is found at 104-436 (HVKVVVRIKP…LRFGERAKAM (333 aa)). 175-182 (GQNGSGKT) lines the ATP pocket. 3 coiled-coil regions span residues 761 to 791 (QQEL…QTED), 872 to 942 (ARSF…LRRA), and 1038 to 1081 (EVLV…HKLE). The tract at residues 1092–1114 (NTLPESALQPLHQRNSAIEEEGM) is disordered.

This sequence belongs to the TRAFAC class myosin-kinesin ATPase superfamily. Kinesin family. KIN-12 subfamily.

This Arabidopsis thaliana (Mouse-ear cress) protein is Kinesin-like protein KIN-12F.